The chain runs to 293 residues: MDLGKVITAMVTPIHPEKDKVCKKRIHHLVNHLIANGSDGLVVAGTTGESPTLSHDEKIKLFRQVIETNAGRAKLIAGTGSNNTAETIAFTKEVAELGGIDAVLVVAPYYNKPNQDGLYAHFVAVAEASDLPVVIYNIPGRSVVNIEPETIIRLAKLPNIVGVKESSGNLDNISKIIAETPEDFLVYSGDDSLTLPILAVGGDGVISVASHVVGKEMQEMIQAFARGEVQKAASIHRSLLPIMNGLFAVPNPAPTKYLLNQQGISVGPVRLPLVDLNAEQGTKLQAILEGLSK.

Residue threonine 47 coordinates pyruvate. Tyrosine 136 functions as the Proton donor/acceptor in the catalytic mechanism. Catalysis depends on lysine 164, which acts as the Schiff-base intermediate with substrate. A pyruvate-binding site is contributed by isoleucine 206.

Belongs to the DapA family. In terms of assembly, homotetramer; dimer of dimers.

Its subcellular location is the cytoplasm. The catalysed reaction is L-aspartate 4-semialdehyde + pyruvate = (2S,4S)-4-hydroxy-2,3,4,5-tetrahydrodipicolinate + H2O + H(+). It functions in the pathway amino-acid biosynthesis; L-lysine biosynthesis via DAP pathway; (S)-tetrahydrodipicolinate from L-aspartate: step 3/4. Its function is as follows. Catalyzes the condensation of (S)-aspartate-beta-semialdehyde [(S)-ASA] and pyruvate to 4-hydroxy-tetrahydrodipicolinate (HTPA). This chain is 4-hydroxy-tetrahydrodipicolinate synthase, found in Listeria welshimeri serovar 6b (strain ATCC 35897 / DSM 20650 / CCUG 15529 / CIP 8149 / NCTC 11857 / SLCC 5334 / V8).